Consider the following 982-residue polypeptide: Bifunctional glutamine synthetase adenylyltransferase/adenylyl-removing enzyme (982 aa).

Positions 1-460 are adenylyl removase; that stretch reads MSLPSLANLP…HFRQVIADPD (460 aa). The interval 473–982 is adenylyl transferase; that stretch reads GAEWIPLWEE…IRIWRELRLG (510 aa).

This sequence belongs to the GlnE family. Requires Mg(2+) as cofactor.

The enzyme catalyses [glutamine synthetase]-O(4)-(5'-adenylyl)-L-tyrosine + phosphate = [glutamine synthetase]-L-tyrosine + ADP. The catalysed reaction is [glutamine synthetase]-L-tyrosine + ATP = [glutamine synthetase]-O(4)-(5'-adenylyl)-L-tyrosine + diphosphate. In terms of biological role, involved in the regulation of glutamine synthetase GlnA, a key enzyme in the process to assimilate ammonia. When cellular nitrogen levels are high, the C-terminal adenylyl transferase (AT) inactivates GlnA by covalent transfer of an adenylyl group from ATP to specific tyrosine residue of GlnA, thus reducing its activity. Conversely, when nitrogen levels are low, the N-terminal adenylyl removase (AR) activates GlnA by removing the adenylyl group by phosphorolysis, increasing its activity. The regulatory region of GlnE binds the signal transduction protein PII (GlnB) which indicates the nitrogen status of the cell. In Pseudomonas aeruginosa (strain ATCC 15692 / DSM 22644 / CIP 104116 / JCM 14847 / LMG 12228 / 1C / PRS 101 / PAO1), this protein is Bifunctional glutamine synthetase adenylyltransferase/adenylyl-removing enzyme.